Here is an 87-residue protein sequence, read N- to C-terminus: uncharacterized protein (87 aa).

Transmembrane regions (helical) follow at residues 8–28 (IVVLIGTQLAASAVILFIFDL) and 47–67 (LAGSFAFYLFSAGLFFLLIGL).

It is found in the cell membrane. This is an uncharacterized protein from Bacillus subtilis (strain 168).